The following is a 147-amino-acid chain: Deoxyuridine 5'-triphosphate nucleotidohydrolase (147 aa).

Substrate is bound by residues 67–69 (RSG), Asn-80, and 84–86 (LID).

Belongs to the dUTPase family. The cofactor is Mg(2+).

The catalysed reaction is dUTP + H2O = dUMP + diphosphate + H(+). The protein operates within pyrimidine metabolism; dUMP biosynthesis; dUMP from dCTP (dUTP route): step 2/2. Its function is as follows. This enzyme is involved in nucleotide metabolism: it produces dUMP, the immediate precursor of thymidine nucleotides and it decreases the intracellular concentration of dUTP so that uracil cannot be incorporated into DNA. The protein is Deoxyuridine 5'-triphosphate nucleotidohydrolase of Dictyoglomus turgidum (strain DSM 6724 / Z-1310).